The primary structure comprises 159 residues: tRNA-specific adenosine deaminase (159 aa).

Positions 6-133 (EEQTYFMQEA…ERLNHRVQVE (128 aa)) constitute a CMP/dCMP-type deaminase domain. Zn(2+) is bound at residue His-57. Glu-59 acts as the Proton donor in catalysis. The Zn(2+) site is built by Cys-87 and Cys-90.

It belongs to the cytidine and deoxycytidylate deaminase family. In terms of assembly, homodimer. The cofactor is Zn(2+).

The enzyme catalyses adenosine(34) in tRNA + H2O + H(+) = inosine(34) in tRNA + NH4(+). In terms of biological role, catalyzes the deamination of adenosine to inosine at the wobble position 34 of tRNA(Arg2). This is tRNA-specific adenosine deaminase from Streptococcus pyogenes serotype M18 (strain MGAS8232).